A 317-amino-acid polypeptide reads, in one-letter code: Melanocyte-stimulating hormone receptor (317 aa).

Over 1–37 the chain is Extracellular; it reads MPVQGSQRRLLGSLNSTPTATPRLGLAANQTGARCLE. An N-linked (GlcNAc...) asparagine glycan is attached at Asn-29. A helical transmembrane segment spans residues 38-63; that stretch reads VSIPDGLFLSLGLVSLVENVLVVVAI. Topologically, residues 64-72 are cytoplasmic; the sequence is ARNRNLHSP. A helical transmembrane segment spans residues 73-93; it reads MYCFICCLALSDLLVSGSNML. Over 94–118 the chain is Extracellular; that stretch reads ETAVFLLLEAGALAARAAVVQQLDN. The chain crosses the membrane as a helical span at residues 119 to 140; the sequence is VIDVITCSSMLSSLCFLGAIAV. The Cytoplasmic portion of the chain corresponds to 141–163; that stretch reads DRYISIFYALRYHSIVTLRRARR. The chain crosses the membrane as a helical span at residues 164-183; it reads VVAAIWVASVLFSTLFIAYC. Topologically, residues 184-191 are extracellular; sequence DHAAVLLC. A helical membrane pass occupies residues 192–211; that stretch reads LVVFFLAMLVLMAVLYVHML. Residues 212–240 are Cytoplasmic-facing; that stretch reads ARACQHAQGIAQLHKRQRPAHQGVGLKGA. The helical transmembrane segment at 241-266 threads the bilayer; that stretch reads ATLTILLGIFFLCWGPFFLHLTLIVL. Over 267–279 the chain is Extracellular; it reads CPQHPTCSCIFKN. A helical membrane pass occupies residues 280–300; it reads FNLFLTLIICNAIIDPLIYAF. The Cytoplasmic segment spans residues 301-317; the sequence is RSQELRRTLKKVLLCSW. Residue Cys-315 is the site of S-palmitoyl cysteine attachment.

The protein belongs to the G-protein coupled receptor 1 family. As to quaternary structure, interacts with MGRN1, but does not undergo MGRN1-mediated ubiquitination; this interaction competes with GNAS-binding and thus inhibits agonist-induced cAMP production. Interacts with OPN3; the interaction results in a decrease in MC1R-mediated cAMP signaling and ultimately a decrease in melanin production in melanocytes.

It localises to the cell membrane. Functionally, receptor for MSH (alpha, beta and gamma) and ACTH. The activity of this receptor is mediated by G proteins which activate adenylate cyclase. Mediates melanogenesis, the production of eumelanin (black/brown) and phaeomelanin (red/yellow), via regulation of cAMP signaling in melanocytes. This chain is Melanocyte-stimulating hormone receptor (MC1R), found in Trachypithecus obscurus (Dusky leaf-monkey).